The sequence spans 109 residues: Ubiquitin-related modifier 1 homolog (109 aa).

At Gly-109 the chain carries 1-thioglycine. A Glycyl lysine isopeptide (Gly-Lys) (interchain with K-? in acceptor proteins) cross-link involves residue Gly-109.

Belongs to the URM1 family. C-terminal thiocarboxylation occurs in 2 steps, it is first acyl-adenylated (-COAMP) via the hesA/moeB/thiF part of the MOCS3 homolog, then thiocarboxylated (-COSH) via the rhodanese domain of the MOCS3 homolog.

Its subcellular location is the cytoplasm. It participates in tRNA modification; 5-methoxycarbonylmethyl-2-thiouridine-tRNA biosynthesis. Its function is as follows. Acts as a sulfur carrier required for 2-thiolation of mcm(5)S(2)U at tRNA wobble positions of cytosolic tRNA(Lys), tRNA(Glu) and tRNA(Gln). Serves as sulfur donor in tRNA 2-thiolation reaction by being thiocarboxylated (-COSH) at its C-terminus by MOCS3. The sulfur is then transferred to tRNA to form 2-thiolation of mcm(5)S(2)U. Also acts as a ubiquitin-like protein (UBL) that is covalently conjugated via an isopeptide bond to lysine residues of target proteins. The thiocarboxylated form serves as substrate for conjugation and oxidative stress specifically induces the formation of UBL-protein conjugates. This chain is Ubiquitin-related modifier 1 homolog, found in Anopheles gambiae (African malaria mosquito).